The primary structure comprises 377 residues: 4-hydroxy-3-methylbut-2-en-1-yl diphosphate synthase (flavodoxin) (377 aa).

The [4Fe-4S] cluster site is built by Cys270, Cys273, Cys305, and Glu312.

This sequence belongs to the IspG family. [4Fe-4S] cluster serves as cofactor.

The enzyme catalyses (2E)-4-hydroxy-3-methylbut-2-enyl diphosphate + oxidized [flavodoxin] + H2O + 2 H(+) = 2-C-methyl-D-erythritol 2,4-cyclic diphosphate + reduced [flavodoxin]. Its pathway is isoprenoid biosynthesis; isopentenyl diphosphate biosynthesis via DXP pathway; isopentenyl diphosphate from 1-deoxy-D-xylulose 5-phosphate: step 5/6. Functionally, converts 2C-methyl-D-erythritol 2,4-cyclodiphosphate (ME-2,4cPP) into 1-hydroxy-2-methyl-2-(E)-butenyl 4-diphosphate. The protein is 4-hydroxy-3-methylbut-2-en-1-yl diphosphate synthase (flavodoxin) of Bacillus subtilis (strain 168).